A 262-amino-acid chain; its full sequence is Membrane protein US15 (262 aa).

7 helical membrane-spanning segments follow: residues 46–66 (GAVG…CYAA), 77–97 (CLTE…VIFI), 108–128 (IGVL…ICLC), 133–153 (LVIS…GVAL), 163–183 (QIVV…VVIL), 186–206 (GWSW…CLAV), and 226–246 (LLAA…VLRI).

The protein belongs to the HHV-5 US12 protein family.

It localises to the host membrane. The polypeptide is Membrane protein US15 (US15) (Human cytomegalovirus (strain Merlin) (HHV-5)).